Consider the following 197-residue polypeptide: UPF0301 protein A2cp1_4106 (197 aa).

This sequence belongs to the UPF0301 (AlgH) family.

The protein is UPF0301 protein A2cp1_4106 of Anaeromyxobacter dehalogenans (strain 2CP-1 / ATCC BAA-258).